Here is a 314-residue protein sequence, read N- to C-terminus: tRNA dimethylallyltransferase (314 aa).

ATP is bound at residue 13-20; the sequence is GPTAVGKT. Residue 15-20 participates in substrate binding; sequence TAVGKT. The tract at residues 38–41 is interaction with substrate tRNA; it reads DSMQ.

This sequence belongs to the IPP transferase family. In terms of assembly, monomer. Requires Mg(2+) as cofactor.

The catalysed reaction is adenosine(37) in tRNA + dimethylallyl diphosphate = N(6)-dimethylallyladenosine(37) in tRNA + diphosphate. Catalyzes the transfer of a dimethylallyl group onto the adenine at position 37 in tRNAs that read codons beginning with uridine, leading to the formation of N6-(dimethylallyl)adenosine (i(6)A). The chain is tRNA dimethylallyltransferase from Bacillus subtilis (strain 168).